The following is a 345-amino-acid chain: tRNA pseudouridine synthase B (345 aa).

The active-site Nucleophile is D39.

It belongs to the pseudouridine synthase TruB family. Type 1 subfamily.

It catalyses the reaction uridine(55) in tRNA = pseudouridine(55) in tRNA. In terms of biological role, responsible for synthesis of pseudouridine from uracil-55 in the psi GC loop of transfer RNAs. This chain is tRNA pseudouridine synthase B, found in Rickettsia africae (strain ESF-5).